The primary structure comprises 222 residues: UPF0502 protein PBPRB0676 (222 aa).

This sequence belongs to the UPF0502 family.

The chain is UPF0502 protein PBPRB0676 from Photobacterium profundum (strain SS9).